A 425-amino-acid polypeptide reads, in one-letter code: Glutamyl-tRNA(Gln) amidotransferase subunit A (425 aa).

Active-site charge relay system residues include lysine 29 and serine 104. Serine 128 serves as the catalytic Acyl-ester intermediate.

This sequence belongs to the amidase family. GatA subfamily. In terms of assembly, heterotrimer of A, B and C subunits.

The catalysed reaction is L-glutamyl-tRNA(Gln) + L-glutamine + ATP + H2O = L-glutaminyl-tRNA(Gln) + L-glutamate + ADP + phosphate + H(+). In terms of biological role, allows the formation of correctly charged Gln-tRNA(Gln) through the transamidation of misacylated Glu-tRNA(Gln) in organisms which lack glutaminyl-tRNA synthetase. The reaction takes place in the presence of glutamine and ATP through an activated gamma-phospho-Glu-tRNA(Gln). This is Glutamyl-tRNA(Gln) amidotransferase subunit A from Haloarcula marismortui (strain ATCC 43049 / DSM 3752 / JCM 8966 / VKM B-1809) (Halobacterium marismortui).